The primary structure comprises 1030 residues: Kinesin-related protein 6 (1030 aa).

The region spanning 3–66 is the SAM domain; that stretch reads FENDQLYNWL…FHLLQQLKKQ (64 aa). 2 disordered regions span residues 66–164 and 178–308; these read QTPP…SDFM and RQQY…EDDD. Positions 68-80 are enriched in polar residues; sequence PPISNTSSPVINS. Composition is skewed to low complexity over residues 81 to 117, 125 to 164, 181 to 197, and 225 to 238; these read NNNN…NNNN, TSTS…SDFM, YAKQ…KYQS, and QQQQ…QQQD. Acidic residues predominate over residues 239-290; that stretch reads FEFEEEEEEEDQQQQYDEEEEEEEEYEEDFYKEDLGEIDDGNVLDISDDEPD. The Kinesin motor domain maps to 453–775; that stretch reads RIRVCVRKRP…LRYADRVKEL (323 aa). ATP is bound at residue 543-550; sequence GQTGSGKT. 3 stretches are compositionally biased toward low complexity: residues 826–839, 849–906, and 981–1009; these read INSQ…TSQP, QQQE…QTQP, and PIQQ…QTPQ. 2 disordered regions span residues 826–915 and 981–1030; these read INSQ…KIDF and PIQQ…SSRN.

Belongs to the TRAFAC class myosin-kinesin ATPase superfamily. Kinesin family.

The protein localises to the cytoplasm. It localises to the cytoskeleton. Functionally, microtubule-associated force-producing protein that plays a role in organelle transport. Its motor activity is directed toward the microtubule's plus end. This is Kinesin-related protein 6 (kif6) from Dictyostelium discoideum (Social amoeba).